Consider the following 522-residue polypeptide: Lysophospholipid acyltransferase LPCAT4 (522 aa).

A run of 2 helical transmembrane segments spans residues 43–63 and 92–112; these read ILGFTLFPLRFLLAAIFLFLM and HLIYLLSRTMFFMCGFHWITI. The short motif at 130–135 is the HXXXXD motif element; the sequence is HSTFFD. Residues asparagine 166 and asparagine 517 are each glycosylated (N-linked (GlcNAc...) asparagine). A disordered region spans residues 496–522; that stretch reads GRRKPPHIQQNGGCSGKNNPRNQSKMD. Residues 503–522 are compositionally biased toward polar residues; sequence IQQNGGCSGKNNPRNQSKMD.

Belongs to the 1-acyl-sn-glycerol-3-phosphate acyltransferase family.

It localises to the endoplasmic reticulum membrane. It carries out the reaction a 1-acyl-sn-glycero-3-phosphoethanolamine + an acyl-CoA = a 1,2-diacyl-sn-glycero-3-phosphoethanolamine + CoA. The enzyme catalyses a 1-O-(1Z-alkenyl)-sn-glycero-3-phosphoethanolamine + an acyl-CoA = a 1-O-(1Z-alkenyl)-2-acyl-sn-glycero-3-phosphoethanolamine + CoA. The catalysed reaction is a 1-acyl-sn-glycero-3-phosphocholine + an acyl-CoA = a 1,2-diacyl-sn-glycero-3-phosphocholine + CoA. It catalyses the reaction a 1-O-alkyl-sn-glycero-3-phosphocholine + acetyl-CoA = a 1-O-alkyl-2-acetyl-sn-glycero-3-phosphocholine + CoA. It carries out the reaction a 1-acyl-sn-glycero-3-phospho-L-serine + an acyl-CoA = a 1,2-diacyl-sn-glycero-3-phospho-L-serine + CoA. The protein operates within lipid metabolism; phospholipid metabolism. Its function is as follows. Displays acyl-CoA-dependent lysophospholipid acyltransferase activity with a subset of lysophospholipids as substrates. Prefers long chain acyl-CoAs (C16, C18) as acyl donors. The chain is Lysophospholipid acyltransferase LPCAT4 (lpcat4) from Xenopus tropicalis (Western clawed frog).